Reading from the N-terminus, the 302-residue chain is Haloalkane dehalogenase (302 aa).

Residues 48–150 enclose the AB hydrolase-1 domain; the sequence is PVLLMHGEPS…AGLVIANTGL (103 aa). Asp-123 acts as the Nucleophile in catalysis. Residue Asp-249 is the Proton donor of the active site. His-278 (proton acceptor) is an active-site residue.

The protein belongs to the haloalkane dehalogenase family. Type 1 subfamily. Monomer.

The catalysed reaction is 1-haloalkane + H2O = a halide anion + a primary alcohol + H(+). Functionally, catalyzes hydrolytic cleavage of carbon-halogen bonds in halogenated aliphatic compounds, leading to the formation of the corresponding primary alcohols, halide ions and protons. In Caulobacter sp. (strain K31), this protein is Haloalkane dehalogenase.